A 181-amino-acid chain; its full sequence is Probable cobalt-precorrin-6B C(15)-methyltransferase (decarboxylating) (181 aa).

Residues Thr-16, 40–44 (GCGSG), Asp-61, and Ala-89 contribute to the S-adenosyl-L-methionine site.

This sequence belongs to the methyltransferase superfamily. Archaeal-type CbiT family.

It catalyses the reaction Co-precorrin-6B + S-adenosyl-L-methionine = Co-precorrin-7 + S-adenosyl-L-homocysteine + CO2. It participates in cofactor biosynthesis; adenosylcobalamin biosynthesis; cob(II)yrinate a,c-diamide from sirohydrochlorin (anaerobic route): step 8/10. Its function is as follows. Catalyzes the methylation of C-15 in cobalt-precorrin-6B followed by the decarboxylation of C-12 to form cobalt-precorrin-7. The sequence is that of Probable cobalt-precorrin-6B C(15)-methyltransferase (decarboxylating) from Methanococcus maripaludis (strain C6 / ATCC BAA-1332).